A 202-amino-acid chain; its full sequence is Matrix protein (202 aa).

The PPXY motif signature appears at 35–38; it reads PPEY. The segment at 115-151 is essential for glycoprotein binding; that stretch reads KLRRTLIFQWADSRGPLEGEELEYSQEITWDDDTEFV.

This sequence belongs to the lyssavirus matrix protein family. Homomultimer. Interacts with nucleoprotein and with the cytoplasmic domain of glycoprotein. Interacts with host ATP6V1A; this interaction plays an important role in virion uncoating after viral entry.

Its subcellular location is the virion membrane. The protein localises to the host endomembrane system. The protein resides in the host cytoplasm. Plays a major role in assembly, budding and uncoating of virion after membrane fusion. Completely covers the ribonucleoprotein coil and keep it in condensed bullet-shaped form. Inhibits viral transcription and stimulates replication. Plays a major role in early induction of TRAIL-mediated apoptosis in infected neurons. Inhibits the integrated stress response (ISR) in the infected cell by blocking the formation of stress granules. This Homo sapiens (Human) protein is Matrix protein (M).